Consider the following 188-residue polypeptide: Peptidyl-tRNA hydrolase (188 aa).

Tyrosine 14 serves as a coordination point for tRNA. The Proton acceptor role is filled by histidine 19. TRNA contacts are provided by tyrosine 64, asparagine 66, and asparagine 112.

This sequence belongs to the PTH family. Monomer.

It is found in the cytoplasm. It catalyses the reaction an N-acyl-L-alpha-aminoacyl-tRNA + H2O = an N-acyl-L-amino acid + a tRNA + H(+). Functionally, hydrolyzes ribosome-free peptidyl-tRNAs (with 1 or more amino acids incorporated), which drop off the ribosome during protein synthesis, or as a result of ribosome stalling. Catalyzes the release of premature peptidyl moieties from peptidyl-tRNA molecules trapped in stalled 50S ribosomal subunits, and thus maintains levels of free tRNAs and 50S ribosomes. In Bacillus velezensis (strain DSM 23117 / BGSC 10A6 / LMG 26770 / FZB42) (Bacillus amyloliquefaciens subsp. plantarum), this protein is Peptidyl-tRNA hydrolase.